The primary structure comprises 1911 residues: Adenylate kinase 9 (1911 aa).

The segment at V31–K285 is adenylate kinase 1. ATP is bound at residue G40–T45. Residues E60–I89 form an NMP 1 region. AMP is bound by residues Q87 to I89 and E116 to S119. The tract at residues G160–E205 is LID 1. The segment at R185–E210 is disordered. Residues G197 to E210 are compositionally biased toward acidic residues. R229 is an AMP binding site. Coiled coils occupy residues A443 to V485 and L676 to E711. Disordered regions lie at residues K728–P796 and D892–K926. The span at E733–V750 shows a compositional bias: acidic residues. The segment covering H751 to R761 has biased composition (basic and acidic residues). Composition is skewed to acidic residues over residues E767–V791 and D892–E919. 2 adenylate kinase regions span residues L992–L1203 and I1412–Q1601. Position 1001–1006 (G1001–M1006) interacts with ATP. Positions Q1021 to A1052 are NMP 2. AMP-binding positions include Q1050 to A1052 and V1079 to T1082. Residues D1124–D1144 form an LID 2 region. Residue K1421–T1426 coordinates ATP. Residues S1441–A1472 form an NMP 3 region. AMP is bound by residues R1447, M1470–A1472, G1499–V1502, Q1506, and R1543. The segment at L1536–N1550 is LID 3.

This sequence belongs to the adenylate kinase family.

Its subcellular location is the cytoplasm. It localises to the nucleus. It is found in the cell projection. The protein resides in the cilium. The protein localises to the flagellum. The catalysed reaction is a ribonucleoside 5'-phosphate + ATP = a ribonucleoside 5'-diphosphate + ADP. It carries out the reaction AMP + ATP = 2 ADP. The enzyme catalyses GTP + AMP = GDP + ADP. It catalyses the reaction CMP + ATP = CDP + ADP. The catalysed reaction is GTP + CMP = CDP + GDP. It carries out the reaction dAMP + ATP = dADP + ADP. The enzyme catalyses dCMP + ATP = dCDP + ADP. It catalyses the reaction a ribonucleoside 5'-diphosphate + ATP = a ribonucleoside 5'-triphosphate + ADP. The catalysed reaction is CDP + ATP = CTP + ADP. It carries out the reaction CDP + GTP = CTP + GDP. The enzyme catalyses GDP + ATP = GTP + ADP. It catalyses the reaction UDP + ATP = UTP + ADP. The catalysed reaction is GTP + UDP = UTP + GDP. It carries out the reaction dTDP + GTP = dTTP + GDP. The enzyme catalyses dCDP + ATP = dCTP + ADP. It catalyses the reaction dCDP + GTP = dCTP + GDP. The catalysed reaction is dGDP + ATP = dGTP + ADP. It carries out the reaction dTDP + ATP = dTTP + ADP. The enzyme catalyses dADP + GTP = dATP + GDP. Its function is as follows. Broad-specificity nucleoside phosphate kinase involved in cellular nucleotide homeostasis by catalyzing nucleoside-phosphate interconversions. Similar to other adenylate kinases, preferentially catalyzes the phosphorylation of the nucleoside monophosphate AMP with ATP as phosphate donor to produce ADP. In vitro, can also catalyze the phosphorylation of CMP, dAMP and dCMP and use GTP as an alternate phosphate donor. Moreover, exhibits a diphosphate kinase activity, producing ATP, CTP, GTP, UTP, TTP, dATP, dCTP and dGTP from the corresponding diphosphate substrates with either ATP or GTP as phosphate donors. For this activity shows the following substrate preference CDP &gt; UDP &gt; ADP &gt; TDP. The polypeptide is Adenylate kinase 9 (Homo sapiens (Human)).